Reading from the N-terminus, the 223-residue chain is MTVNIAKMIDHTLLKPEATEEQIIQLCDEAKQHGFASVCVNPAWVKTAARELSDTDVRVCTVIGFPLGATTPETKAFETNNAIENGAREVDMVINIGALKSGNDELVERDIRAVVEAASGKALVKVIIETALLTDEEKVRACQLAVKAGADYVKTSTGFSGGGATVEDVALMRRTVGDKAGVKASGGVRDRKTAEAMIEAGATRIGTSSGVAIVSGQTGGADY.

Aspartate 91 serves as the catalytic Proton donor/acceptor. The active-site Schiff-base intermediate with acetaldehyde is lysine 154. Residue lysine 183 is the Proton donor/acceptor of the active site.

The protein belongs to the DeoC/FbaB aldolase family. DeoC type 1 subfamily.

The protein resides in the cytoplasm. It carries out the reaction 2-deoxy-D-ribose 5-phosphate = D-glyceraldehyde 3-phosphate + acetaldehyde. It functions in the pathway carbohydrate degradation; 2-deoxy-D-ribose 1-phosphate degradation; D-glyceraldehyde 3-phosphate and acetaldehyde from 2-deoxy-alpha-D-ribose 1-phosphate: step 2/2. Its function is as follows. Catalyzes a reversible aldol reaction between acetaldehyde and D-glyceraldehyde 3-phosphate to generate 2-deoxy-D-ribose 5-phosphate. The chain is Deoxyribose-phosphate aldolase from Geobacillus thermodenitrificans (strain NG80-2).